Here is a 308-residue protein sequence, read N- to C-terminus: MAIELPVGKKVTVTVPASSANLGPGFDTLGLALSLYDTVEVEVTDHGLEVEVFGEGQGELPLDGSHLVVKAIRAGLKAADVQVPGLRVVCHNNIPQSRGLGSSAAAAVAGVAAANGLAGFPLDDARVVQLSSAFEGHPDNAAASVLGNAVVSWTEIPVDGRTEPQFKAVTINVDSRIKATALVPDFHASTEAVRRVLPSDVTHLDARFNVSRCAVMTVALQHHPELLWEGTRDRLHQPYRADVLPVTAEWVNRLRNRGYAAYLSGAGPTIMVLHTEPVDEAVLNDAREAGLRVLSLDVADAVSVKVDA.

95–105 (PQSRGLGSSAA) contacts ATP.

The protein belongs to the GHMP kinase family. Homoserine kinase subfamily.

It is found in the cytoplasm. It carries out the reaction L-homoserine + ATP = O-phospho-L-homoserine + ADP + H(+). The protein operates within amino-acid biosynthesis; L-threonine biosynthesis; L-threonine from L-aspartate: step 4/5. Functionally, catalyzes the ATP-dependent phosphorylation of L-homoserine to L-homoserine phosphate. In Corynebacterium diphtheriae (strain ATCC 700971 / NCTC 13129 / Biotype gravis), this protein is Homoserine kinase.